The sequence spans 204 residues: Large ribosomal subunit protein eL15 (204 aa).

Disordered stretches follow at residues 71-91 (RKRP…GVNQ) and 159-182 (REMR…HYSQ). Positions 159–174 (REMRGKTSAGRKHRGL) are enriched in basic residues.

It belongs to the eukaryotic ribosomal protein eL15 family.

This chain is Large ribosomal subunit protein eL15 (RPL15), found in Faxonius limosus (Spinycheek crayfish).